We begin with the raw amino-acid sequence, 248 residues long: Mannose-binding protein C (248 aa).

The N-terminal stretch at 1–20 (MSLFPSLPLLLLSMVAASYS) is a signal peptide. Positions 42–99 (GINGFPGKDGRDGTKGEKGEPGQGLRGLQGPPGKLGPPGNPGPSGSPGAKGQKGDPGA) constitute a Collagen-like domain. Positions 43-112 (INGFPGKDGR…CDSSLANPER (70 aa)) are disordered. Position 47 is a 4-hydroxyproline (P47). The span at 49–61 (KDGRDGTKGEKGE) shows a compositional bias: basic and acidic residues. P73, P79, P82, and P88 each carry 4-hydroxyproline. A coiled-coil region spans residues 112 to 130 (RKTLQTEINRIKKWVTFSL). The C-type lectin domain maps to 134 to 245 (VGKKLFLTNG…CSSSHLVICE (112 aa)). Cystine bridges form between C155–C244 and C222–C236.

Oligomeric complex of 3 or more homotrimers. Interacts with MASP1 and MASP2. Interacts with MEP1A and MEP1B and may inhibit their catalytic activity. Post-translationally, hydroxylation on proline residues within the sequence motif, GXPG, is most likely to be 4-hydroxy as this fits the requirement for 4-hydroxylation in vertebrates.

The protein localises to the secreted. Functionally, calcium-dependent lectin involved in innate immune defense. Binds mannose, fucose and N-acetylglucosamine on different microorganisms and activates the lectin complement pathway. Binds to late apoptotic cells, as well as to apoptotic blebs and to necrotic cells, but not to early apoptotic cells, facilitating their uptake by macrophages. The chain is Mannose-binding protein C (MBL2) from Callithrix jacchus (White-tufted-ear marmoset).